A 175-amino-acid chain; its full sequence is ATP synthase subunit delta (175 aa).

Belongs to the ATPase delta chain family. As to quaternary structure, F-type ATPases have 2 components, F(1) - the catalytic core - and F(0) - the membrane proton channel. F(1) has five subunits: alpha(3), beta(3), gamma(1), delta(1), epsilon(1). F(0) has three main subunits: a(1), b(2) and c(10-14). The alpha and beta chains form an alternating ring which encloses part of the gamma chain. F(1) is attached to F(0) by a central stalk formed by the gamma and epsilon chains, while a peripheral stalk is formed by the delta and b chains.

It is found in the cell inner membrane. Its function is as follows. F(1)F(0) ATP synthase produces ATP from ADP in the presence of a proton or sodium gradient. F-type ATPases consist of two structural domains, F(1) containing the extramembraneous catalytic core and F(0) containing the membrane proton channel, linked together by a central stalk and a peripheral stalk. During catalysis, ATP synthesis in the catalytic domain of F(1) is coupled via a rotary mechanism of the central stalk subunits to proton translocation. This protein is part of the stalk that links CF(0) to CF(1). It either transmits conformational changes from CF(0) to CF(1) or is implicated in proton conduction. In Xylella fastidiosa (strain M23), this protein is ATP synthase subunit delta.